A 636-amino-acid chain; its full sequence is Chaperone protein DnaK (636 aa).

The disordered stretch occupies residues 579-636 (ELYKNAAPPPGADGQQGADGQQGADGQQGADGQQGADGQQGADGQTTESSSNDETKTN). The span at 590 to 623 (ADGQQGADGQQGADGQQGADGQQGADGQQGADGQ) shows a compositional bias: low complexity.

It belongs to the heat shock protein 70 family.

Functionally, acts as a chaperone. The polypeptide is Chaperone protein DnaK (Nitrosopumilus maritimus (strain SCM1)).